We begin with the raw amino-acid sequence, 117 residues long: Putative phosphotransferase enzyme IIB component MPN_268 (117 aa).

Residues 1–21 (MKVLLWIGYVLSFGLLYLYLV) traverse the membrane as a helical segment. The PTS EIIB type-1 domain maps to 42-117 (PFAVRDFIAA…QLKQQIENER (76 aa)).

Its subcellular location is the membrane. Its function is as follows. The phosphoenolpyruvate-dependent sugar phosphotransferase system (PTS), a major carbohydrate active -transport system, catalyzes the phosphorylation of incoming sugar substrates concomitant with their translocation across the cell membrane. This chain is Putative phosphotransferase enzyme IIB component MPN_268, found in Mycoplasma pneumoniae (strain ATCC 29342 / M129 / Subtype 1) (Mycoplasmoides pneumoniae).